Reading from the N-terminus, the 258-residue chain is Alcohol dehydrogenase 2 (258 aa).

An NAD(+)-binding site is contributed by 9 to 33; the sequence is IFVGGLGFIGYEACKQLMAKNMASF. S137 is a binding site for substrate. Catalysis depends on Y150, which acts as the Proton acceptor.

Belongs to the short-chain dehydrogenases/reductases (SDR) family. As to quaternary structure, homodimer.

The enzyme catalyses a primary alcohol + NAD(+) = an aldehyde + NADH + H(+). It carries out the reaction a secondary alcohol + NAD(+) = a ketone + NADH + H(+). This Ceratitis rosa (Natal fruit fly) protein is Alcohol dehydrogenase 2 (ADH2).